Consider the following 437-residue polypeptide: Zinc finger protein 491 (437 aa).

Residues 35 to 59 (KSCESGTCGEIFMGYSSFNRNIRTD) form a C2H2-type 1; degenerate zinc finger. The C2H2-type 2; degenerate zinc finger occupies 103 to 125 (FDCKECEKSFISPASIRRYMVTH). 11 consecutive C2H2-type zinc fingers follow at residues 131–153 (YKCKFCGKALDCLSLYLTHERTH), 159–181 (YECKQCGKAFSWHSSVRIHERTH), 187–209 (YECKECGKSFNFSSSFRRHERTH), 215–237 (YKCKECGKAFNCPSSFHRHERTH), 243–265 (YECKLYGKALSRLISFRRHMRMH), 271–293 (HKCKICGKAFYSPSSFQRHERSH), 299–321 (YKCKQCGKAFTCSTSFQYHERTH), 327–349 (DGCKQCGKAFRSAKYIRIHGRTH), 355–377 (YECKQCGKAFHCVSSFHRHERTH), 383–405 (YECKHCGKAFTCSIYIRIHERIH), and 411–433 (YQCKECGKAFIRSSYCRKHERTH).

This sequence belongs to the krueppel C2H2-type zinc-finger protein family.

The protein localises to the nucleus. Its function is as follows. May be involved in transcriptional regulation. This is Zinc finger protein 491 (ZNF491) from Homo sapiens (Human).